We begin with the raw amino-acid sequence, 232 residues long: Ubiquinone biosynthesis O-methyltransferase (232 aa).

Positions 36, 55, 76, and 120 each coordinate S-adenosyl-L-methionine.

Belongs to the methyltransferase superfamily. UbiG/COQ3 family.

It catalyses the reaction a 3-demethylubiquinol + S-adenosyl-L-methionine = a ubiquinol + S-adenosyl-L-homocysteine + H(+). The enzyme catalyses a 3-(all-trans-polyprenyl)benzene-1,2-diol + S-adenosyl-L-methionine = a 2-methoxy-6-(all-trans-polyprenyl)phenol + S-adenosyl-L-homocysteine + H(+). It functions in the pathway cofactor biosynthesis; ubiquinone biosynthesis. In terms of biological role, O-methyltransferase that catalyzes the 2 O-methylation steps in the ubiquinone biosynthetic pathway. The polypeptide is Ubiquinone biosynthesis O-methyltransferase (Pseudomonas putida (strain GB-1)).